A 223-amino-acid polypeptide reads, in one-letter code: uncharacterized protein (223 aa).

2 helical membrane passes run 1 to 21 and 45 to 65; these read MLII…TFYL and ILIG…TSLI.

Its subcellular location is the cell membrane. This is an uncharacterized protein from Haemophilus influenzae (strain ATCC 51907 / DSM 11121 / KW20 / Rd).